Consider the following 414-residue polypeptide: Esterase FrsA (414 aa).

The protein belongs to the FrsA family.

The catalysed reaction is a carboxylic ester + H2O = an alcohol + a carboxylate + H(+). Functionally, catalyzes the hydrolysis of esters. The protein is Esterase FrsA of Escherichia coli O127:H6 (strain E2348/69 / EPEC).